A 222-amino-acid polypeptide reads, in one-letter code: Cysteine protease inhibitor 1 (222 aa).

Residues 1–26 form the signal peptide; it reads MKSINILSFLLLSSTLSLVAFARSFT. The propeptide occupies 27-42; it reads SENPIVLPTTCHDDDN. The Vacuolar targeting signal motif lies at 29–34; sequence NPIVLP. Cystine bridges form between Cys-84–Cys-136 and Cys-185–Cys-191.

This sequence belongs to the protease inhibitor I3 (leguminous Kunitz-type inhibitor) family. As to expression, tubers, leaves.

The protein localises to the vacuole. Its function is as follows. Potent inhibitor of cathepsin l (cysteine protease). Does not inhibit trypsin or chymotrypsin (serine proteases). May protect the plant by inhibiting proteases of invading organisms. The chain is Cysteine protease inhibitor 1 from Solanum tuberosum (Potato).